We begin with the raw amino-acid sequence, 102 residues long: RNA-binding protein Hfq (102 aa).

The region spanning 9–68 (DPFLNALRRERVPVSIYLVNGIKLQGQIESFDQFVILLKNTVSQMVYKHAISTVVPSRPV) is the Sm domain. Residues 63 to 102 (VPSRPVSHHSNNTGGGSNNYHHGSSPAPSSQPQQDSADAE) form a disordered region. The span at 70 to 102 (HHSNNTGGGSNNYHHGSSPAPSSQPQQDSADAE) shows a compositional bias: low complexity.

Belongs to the Hfq family. Homohexamer.

Its function is as follows. RNA chaperone that binds small regulatory RNA (sRNAs) and mRNAs to facilitate mRNA translational regulation in response to envelope stress, environmental stress and changes in metabolite concentrations. Also binds with high specificity to tRNAs. This is RNA-binding protein Hfq from Erwinia tasmaniensis (strain DSM 17950 / CFBP 7177 / CIP 109463 / NCPPB 4357 / Et1/99).